Consider the following 260-residue polypeptide: Ribonuclease HII (260 aa).

One can recognise an RNase H type-2 domain in the interval 75–260 (ELIAGVDEVG…FEPIKSIIKK (186 aa)). A divalent metal cation is bound by residues Asp-81, Glu-82, and Asp-173.

Belongs to the RNase HII family. The cofactor is Mn(2+). Requires Mg(2+) as cofactor.

It is found in the cytoplasm. It catalyses the reaction Endonucleolytic cleavage to 5'-phosphomonoester.. Functionally, endonuclease that specifically degrades the RNA of RNA-DNA hybrids. The polypeptide is Ribonuclease HII (Streptococcus thermophilus (strain CNRZ 1066)).